A 388-amino-acid polypeptide reads, in one-letter code: Succinate--CoA ligase [ADP-forming] subunit beta (388 aa).

One can recognise an ATP-grasp domain in the interval 9–244 (KQIFAQYGLP…PSQEDAREAA (236 aa)). ATP-binding positions include Lys-46, 53-55 (GRG), Glu-99, Ala-102, and Glu-107. Residues Asn-199 and Asp-213 each contribute to the Mg(2+) site. Substrate contacts are provided by residues Asn-264 and 321–323 (GIV).

This sequence belongs to the succinate/malate CoA ligase beta subunit family. Heterotetramer of two alpha and two beta subunits. It depends on Mg(2+) as a cofactor.

The enzyme catalyses succinate + ATP + CoA = succinyl-CoA + ADP + phosphate. It carries out the reaction GTP + succinate + CoA = succinyl-CoA + GDP + phosphate. It participates in carbohydrate metabolism; tricarboxylic acid cycle; succinate from succinyl-CoA (ligase route): step 1/1. Succinyl-CoA synthetase functions in the citric acid cycle (TCA), coupling the hydrolysis of succinyl-CoA to the synthesis of either ATP or GTP and thus represents the only step of substrate-level phosphorylation in the TCA. The beta subunit provides nucleotide specificity of the enzyme and binds the substrate succinate, while the binding sites for coenzyme A and phosphate are found in the alpha subunit. In Mannheimia succiniciproducens (strain KCTC 0769BP / MBEL55E), this protein is Succinate--CoA ligase [ADP-forming] subunit beta.